Here is a 288-residue protein sequence, read N- to C-terminus: MEKYHGLEKIGEGTYGVVYKAQNNYGETFALKKIRLEKEDEGIPSTAIREISILKELKHSNIVKLYDVIHTKKRLILVFEHLDQDLKKLLDVCDGGLESVTAKSFLLQLLSGIAYCHEHRVLHRDLKPQNLLINREGELKIADFGLARAFGIPVRKYTHEVVTLWYRAPDILMGSKKYSTPIDIWSVGCIFAEMVNGRPLFPGVSETDQLMRIFRILGTPNSANWPSVTELPKYDPDFIVYEPLPWETFLKGLDDTGIDLLSKMLRLDPNQRITAKEALQHAYFKESS.

One can recognise a Protein kinase domain in the interval 4–284 (YHGLEKIGEG…AKEALQHAYF (281 aa)). ATP-binding positions include 10-18 (IGEGTYGVV) and lysine 32. Threonine 14 carries the phosphothreonine modification. Tyrosine 15 carries the phosphotyrosine modification. Aspartate 125 functions as the Proton acceptor in the catalytic mechanism. Threonine 158 carries the post-translational modification Phosphothreonine.

Belongs to the protein kinase superfamily. CMGC Ser/Thr protein kinase family. CDC2/CDKX subfamily. May form a complex composed of at least the catalytic subunit CRK2 and a cyclin. It depends on Mg(2+) as a cofactor.

It is found in the cytoplasm. It carries out the reaction L-seryl-[protein] + ATP = O-phospho-L-seryl-[protein] + ADP + H(+). The catalysed reaction is L-threonyl-[protein] + ATP = O-phospho-L-threonyl-[protein] + ADP + H(+). It catalyses the reaction [DNA-directed RNA polymerase] + ATP = phospho-[DNA-directed RNA polymerase] + ADP + H(+). Phosphorylation at Thr-14 or Tyr-15 inactivates the enzyme, while phosphorylation at Thr-158 activates it. Serine/threonine-protein kinase. Involved in the control of the cell cycle. Required for entry into S-phase and mitosis. Probable component of the kinase complex that phosphorylates the repetitive C-terminus of RNA polymerase II. The polypeptide is Cyclin-dependent kinase 2 homolog (Plasmodium knowlesi (strain H)).